A 309-amino-acid chain; its full sequence is Porphobilinogen deaminase (309 aa).

Cysteine 241 carries the post-translational modification S-(dipyrrolylmethanemethyl)cysteine.

Belongs to the HMBS family. Monomer. Requires dipyrromethane as cofactor.

The enzyme catalyses 4 porphobilinogen + H2O = hydroxymethylbilane + 4 NH4(+). Its pathway is porphyrin-containing compound metabolism; protoporphyrin-IX biosynthesis; coproporphyrinogen-III from 5-aminolevulinate: step 2/4. Its function is as follows. Tetrapolymerization of the monopyrrole PBG into the hydroxymethylbilane pre-uroporphyrinogen in several discrete steps. In Desulforamulus reducens (strain ATCC BAA-1160 / DSM 100696 / MI-1) (Desulfotomaculum reducens), this protein is Porphobilinogen deaminase.